Here is a 404-residue protein sequence, read N- to C-terminus: Metacaspase-1 (404 aa).

A disordered region spans residues 1–97 (MHHHHQQPSY…NPQAFGHGAP (97 aa)). Catalysis depends on residues histidine 195 and cysteine 251.

It belongs to the peptidase C14B family.

In terms of biological role, involved in cell death (apoptosis). This chain is Metacaspase-1 (casA), found in Emericella nidulans (strain FGSC A4 / ATCC 38163 / CBS 112.46 / NRRL 194 / M139) (Aspergillus nidulans).